We begin with the raw amino-acid sequence, 60 residues long: Mastoparan-B (60 aa).

The N-terminal stretch at 1–27 is a signal peptide; sequence MKNTILILFTAFIALLGFFGMSAEALA. AXPX repeat units lie at residues 27-30, 31-34, 35-38, and 41-44; these read ADPL, AEPL, ADPN, and ADPE. The propeptide occupies 28 to 45; that stretch reads DPLAEPLADPNAEADPEA. Position 59 is a leucine amide (Leu59).

This sequence belongs to the MCD family. Mastoparan subfamily. Expressed by the venom gland.

The protein resides in the secreted. It is found in the target cell membrane. Its function is as follows. Antimicrobial and mast cell degranulating peptide. Has broad spectrum antibacterial activity against both Gram-positive (S.aureus MIC=96-128 ug/ml, S.xylosus MIC=2 ug/ml, S.alactolyticus MIC=32 ug/ml, and S.choleraesuis MIC=32 ug/ml) and Gram-negative bacteria (C.koseri MIC=6 ug/ml, E.coli MIC=3-16 ug/ml, K.pneumoniae MIC=128 ug/ml, P.aerugiosa MIC=128 ug/ml, S.typhimurium MIC=64 ug/ml, V.parahamelytics MIC=32 ug/ml, and S.enterica), as well as on fungi (C.albicans, C.glabrata, and C.neoformans). Does not show antimicrobial activity against S.mutans. Affects membrane permeability of E.coli. Also acts as a mast cell degranulating peptide, that causes liberation of histamine from rat peritoneal mast cells. Its mast cell degranulation activity may be related to the activation of G-protein coupled receptors in mast cells as well as interaction with other proteins located in cell endosomal membranes in the mast cells. Whether this peptide shows hemolytic activities is controversial, as Lin et al., 2011 and Ho et al., 1991 found a hemolytic activity on sheep, chicken and human erythrocytes, whereas Kim et al., 2016 found no hemolytic activity on human erythrocytes. In vivo, induces edema in the rat paw. This is Mastoparan-B from Vespa basalis (Hornet).